The primary structure comprises 2542 residues: Zinc finger FYVE domain-containing protein 26 (2542 aa).

Disordered regions lie at residues 591–658 and 740–811; these read HLPE…GPHT and VTSN…QVEA. Residues Ser-612 and Ser-616 each carry the phosphoserine modification. Residues 752–772 show a composition bias toward basic residues; that stretch reads RRYRPTAKRHSSLRRGRRTRR. Positions 785–803 are enriched in low complexity; the sequence is SLEGTSSELSTSTSEGSLS. A Phosphoserine modification is found at Ser-798. Positions 866 to 891 form a coiled coil; it reads MFVERYQEVIQELARVEHKIENQNSD. Positions 1273 to 1292 are disordered; it reads SPRPSENPSAERKSDSSPKD. The span at 1281 to 1290 shows a compositional bias: basic and acidic residues; sequence SAERKSDSSP. Residues 1495–1522 are a coiled coil; sequence VSDMAVPEELKSELQRKLTELRVYQKIL. 4 positions are modified to phosphoserine: Ser-1739, Ser-1761, Ser-1783, and Ser-1785. Positions 1746–1807 are disordered; it reads PVHQASDPET…LEFVPPETPP (62 aa). Over residues 1757–1779 the composition is skewed to low complexity; it reads SRSSSAEFSAAAAAPAPAAPGSA. The FYVE-type zinc-finger motif lies at 1815–1875; it reads DETESMCMVC…VCDQCYSYYN (61 aa). Cys-1821, Cys-1824, Cys-1838, Cys-1841, Cys-1846, Cys-1849, Cys-1867, and Cys-1870 together coordinate Zn(2+).

The protein belongs to the ZFYVE26 family. As to quaternary structure, interacts with AP5Z1, AP5B1, AP5S1 and SPG11. Interacts with TTC19 and KIF13A.

The protein resides in the cytoplasm. The protein localises to the cytoskeleton. It is found in the microtubule organizing center. Its subcellular location is the centrosome. It localises to the midbody. In terms of biological role, phosphatidylinositol 3-phosphate-binding protein required for the abscission step in cytokinesis: recruited to the midbody during cytokinesis and acts as a regulator of abscission. May also be required for efficient homologous recombination DNA double-strand break repair. The sequence is that of Zinc finger FYVE domain-containing protein 26 (Zfyve26) from Rattus norvegicus (Rat).